Reading from the N-terminus, the 304-residue chain is MSWIERIKSNITPTRKASIPEGVWTKCDSCGQVLYRAELERNLEVCPKCDHHMRMTARNRLHSLLDEGSLVELGSELEPKDELKFRDSKKYKDRLASAQKETGEKDALVVMKGTLYGMPVVAAAFEFAFMGGSMGSVVGARFVRAVEQAQEDNCPLICFSASGGARMQEALMSLMQMAKTSAALAKMQERGLPYISVLTDPTMGGVSASFAMLGDLNIAEPKALIGFAGPRVIEQTVREKLPPRFQRSEFLIEKGAIDMIVRRPEMRLKLASILAKLMNLPAPNPEAPREGVVVPPVPDQEPEA.

Positions 23–292 constitute a CoA carboxyltransferase N-terminal domain; it reads VWTKCDSCGQ…PNPEAPREGV (270 aa). Zn(2+) contacts are provided by Cys27, Cys30, Cys46, and Cys49. The segment at 27–49 adopts a C4-type zinc-finger fold; the sequence is CDSCGQVLYRAELERNLEVCPKC. Residues 284–304 form a disordered region; the sequence is NPEAPREGVVVPPVPDQEPEA. A compositionally biased stretch (pro residues) spans 295 to 304; it reads PPVPDQEPEA.

This sequence belongs to the AccD/PCCB family. In terms of assembly, acetyl-CoA carboxylase is a heterohexamer composed of biotin carboxyl carrier protein (AccB), biotin carboxylase (AccC) and two subunits each of ACCase subunit alpha (AccA) and ACCase subunit beta (AccD). The cofactor is Zn(2+).

The protein resides in the cytoplasm. The catalysed reaction is N(6)-carboxybiotinyl-L-lysyl-[protein] + acetyl-CoA = N(6)-biotinyl-L-lysyl-[protein] + malonyl-CoA. It participates in lipid metabolism; malonyl-CoA biosynthesis; malonyl-CoA from acetyl-CoA: step 1/1. Its function is as follows. Component of the acetyl coenzyme A carboxylase (ACC) complex. Biotin carboxylase (BC) catalyzes the carboxylation of biotin on its carrier protein (BCCP) and then the CO(2) group is transferred by the transcarboxylase to acetyl-CoA to form malonyl-CoA. In Shigella flexneri, this protein is Acetyl-coenzyme A carboxylase carboxyl transferase subunit beta.